Reading from the N-terminus, the 609-residue chain is X-ray repair cross-complementing protein 6 (609 aa).

A disordered region spans residues 1–28 (MSGWESYYKTEGDEEAEEEQEENLEASG). Serine 2 carries the N-acetylserine modification. Serine 2 carries the post-translational modification Phosphoserine. A Phosphoserine; by PRKDC modification is found at serine 6. A compositionally biased stretch (acidic residues) spans 12 to 24 (GDEEAEEEQEENL). Residue serine 27 is modified to Phosphoserine. Lysine 31 (schiff-base intermediate with DNA; for 5'-deoxyribose-5-phosphate lyase activity) is an active-site residue. Lysine 31 bears the N6-acetyllysine mark. At serine 51 the chain carries Phosphoserine; by PRKDC. Positions 261–468 (LKLNKDIVIS…VGKMKAIVEK (208 aa)) constitute a Ku domain. The DNA-binding stretch occupies residues 277-341 (VQKALKPPPI…EETEELKRFD (65 aa)). Lysine 287 participates in a covalent cross-link: Glycyl lysine isopeptide (Lys-Gly) (interchain with G-Cter in SUMO2). Serine 306 bears the Phosphoserine mark. N6-acetyllysine is present on residues lysine 317, lysine 331, and lysine 338. Lysine 317 is covalently cross-linked (Glycyl lysine isopeptide (Lys-Gly) (interchain with G-Cter in SUMO2)). Positions 373-482 (SLVIGSSTLF…YRSDSFENPV (110 aa)) are interaction with XRCC5. Threonine 455 carries the post-translational modification Phosphothreonine. Lysine 461 carries the post-translational modification N6-acetyllysine. Phosphoserine is present on residues serine 477 and serine 520. The disordered stretch occupies residues 536–562 (PEGKVTKRKHDNEGSGSKRPKVEYSEE). Residues lysine 539, lysine 542, and lysine 544 each carry the N6-acetyllysine modification. Serine 550 bears the Phosphoserine mark. The interaction with DEAF1 stretch occupies residues 550–609 (SGSKRPKVEYSEEELKTHISKGTLGKFTVPMLKEACRAYGLKSGLKKQELLEALTKHFQD). 2 positions are modified to N6-acetyllysine: lysine 553 and lysine 556. Lysine 556 participates in a covalent cross-link: Glycyl lysine isopeptide (Lys-Gly) (interchain with G-Cter in SUMO2). Serine 560 is subject to Phosphoserine. At lysine 570 the chain carries N6,N6,N6-trimethyllysine. One can recognise an SAP domain in the interval 573–607 (LGKFTVPMLKEACRAYGLKSGLKKQELLEALTKHF). The interval 578–583 (VPMLKE) is interaction with BAX.

Belongs to the ku70 family. As to quaternary structure, forms a heterodimer with XRCC5/Ku80; heterodimerization stabilizes XRCC5 protein. Component of the core long-range non-homologous end joining (NHEJ) complex (also named DNA-PK complex) composed of PRKDC, LIG4, XRCC4, XRCC6/Ku70, XRCC5/Ku86 and NHEJ1/XLF. Additional component of the NHEJ complex includes PAXX. Following autophosphorylation, PRKDC dissociates from DNA, leading to formation of the short-range NHEJ complex, composed of LIG4, XRCC4, XRCC6/Ku70, XRCC5/Ku86 and NHEJ1/XLF. The XRCC5-XRCC6 dimer also associates with NAA15, and this complex binds to the osteocalcin promoter and activates osteocalcin expression. In addition, XRCC6 interacts with the osteoblast-specific transcription factors MSX2, RUNX2 and DLX5. Interacts with ELF3. Interacts with ATP23. The XRCC5-XRRC6 dimer associates in a DNA-dependent manner with APEX1. Binds to CDK9 isoform 2. Identified in a complex with DEAF1 and XRCC5. Interacts with DEAF1 (via the SAND domain); the interaction is direct and may be inhibited by DNA-binding. Interacts with CLU. Interacts with NR4A3; the DNA-dependent protein kinase complex DNA-PK phosphorylates and activates NR4A3 and prevents NR4A3 ubiquitinylation and degradation. Interacts with CYREN isoform 1 (CYREN-1) and isoform 4 (CYREN-2) (via KBM motif). Interacts (via N-terminus) with HSF1 (via N-terminus); this interaction is direct and prevents XRCC5/XRCC6 heterodimeric binding and non-homologous end joining (NHEJ) repair activities induced by ionizing radiation (IR). Part of the HDP-RNP complex composed of at least HEXIM1, PRKDC, XRCC5, XRCC6, paraspeckle proteins (SFPQ, NONO, PSPC1, RBM14, and MATR3) and NEAT1 RNA. Interacts with HMBOX1. Interacts with ATF7. Interacts with APLF (via KBM motif). Interacts with WRN (via KBM motif). The XRCC5-XRCC6 dimer associates with ALKBH2. Interacts with TPRN; TPRN interacts with a number of DNA damage response proteins, is recruited to sites of DNA damage and may play a role in DNA damage repair. When not acetylated, interacts with BAX. Interacts with ERCC6L2. (Microbial infection) Interacts with human T-cell leukemia virus 1/HTLV-1 protein HBZ. In terms of processing, phosphorylation by PRKDC may enhance helicase activity. Phosphorylation of Ser-51 does not affect DNA repair. Post-translationally, ADP-ribosylated by PARP3. Methylation by SETD4 leads to accumulation in the cytoplasm and is a prerequisite for acetylation, possibly due to the change of subcellular from the nucleus to the cytosol initiated by methylation, acetylation occurring in the cytosol. In terms of processing, acetylation can be catalyzed in vitro by CREBBP/CBP and KAT2B/PCAF.

Its subcellular location is the nucleus. The protein resides in the chromosome. It is found in the cytoplasm. Its function is as follows. Single-stranded DNA-dependent ATP-dependent helicase that plays a key role in DNA non-homologous end joining (NHEJ) by recruiting DNA-PK to DNA. Required for double-strand break repair and V(D)J recombination. Also has a role in chromosome translocation. Has a role in chromosome translocation. The DNA helicase II complex binds preferentially to fork-like ends of double-stranded DNA in a cell cycle-dependent manner. It works in the 3'-5' direction. During NHEJ, the XRCC5-XRRC6 dimer performs the recognition step: it recognizes and binds to the broken ends of the DNA and protects them from further resection. Binding to DNA may be mediated by XRCC6. The XRCC5-XRRC6 dimer acts as a regulatory subunit of the DNA-dependent protein kinase complex DNA-PK by increasing the affinity of the catalytic subunit PRKDC to DNA by 100-fold. The XRCC5-XRRC6 dimer is probably involved in stabilizing broken DNA ends and bringing them together. The assembly of the DNA-PK complex to DNA ends is required for the NHEJ ligation step. Probably also acts as a 5'-deoxyribose-5-phosphate lyase (5'-dRP lyase), by catalyzing the beta-elimination of the 5' deoxyribose-5-phosphate at an abasic site near double-strand breaks. 5'-dRP lyase activity allows to 'clean' the termini of abasic sites, a class of nucleotide damage commonly associated with strand breaks, before such broken ends can be joined. The XRCC5-XRRC6 dimer together with APEX1 acts as a negative regulator of transcription. In association with NAA15, the XRCC5-XRRC6 dimer binds to the osteocalcin promoter and activates osteocalcin expression. Plays a role in the regulation of DNA virus-mediated innate immune response by assembling into the HDP-RNP complex, a complex that serves as a platform for IRF3 phosphorylation and subsequent innate immune response activation through the cGAS-STING pathway. Negatively regulates apoptosis by interacting with BAX and sequestering it from the mitochondria. Might have deubiquitination activity, acting on BAX. This Homo sapiens (Human) protein is X-ray repair cross-complementing protein 6 (XRCC6).